A 237-amino-acid polypeptide reads, in one-letter code: Phosphoribosylaminoimidazole-succinocarboxamide synthase (237 aa).

Belongs to the SAICAR synthetase family.

The catalysed reaction is 5-amino-1-(5-phospho-D-ribosyl)imidazole-4-carboxylate + L-aspartate + ATP = (2S)-2-[5-amino-1-(5-phospho-beta-D-ribosyl)imidazole-4-carboxamido]succinate + ADP + phosphate + 2 H(+). It participates in purine metabolism; IMP biosynthesis via de novo pathway; 5-amino-1-(5-phospho-D-ribosyl)imidazole-4-carboxamide from 5-amino-1-(5-phospho-D-ribosyl)imidazole-4-carboxylate: step 1/2. This Proteus mirabilis (strain HI4320) protein is Phosphoribosylaminoimidazole-succinocarboxamide synthase.